The following is a 38-amino-acid chain: Large ribosomal subunit protein bL36 (38 aa).

The protein belongs to the bacterial ribosomal protein bL36 family.

In Hahella chejuensis (strain KCTC 2396), this protein is Large ribosomal subunit protein bL36.